Here is a 232-residue protein sequence, read N- to C-terminus: Thrombin-like enzyme BjussuSP-1 (232 aa).

Positions 1–223 constitute a Peptidase S1 domain; that stretch reads VLGGDECDIN…YTDWIQRNIA (223 aa). Intrachain disulfides connect cysteine 7/cysteine 138, cysteine 25/cysteine 41, cysteine 73/cysteine 230, cysteine 117/cysteine 184, cysteine 149/cysteine 163, and cysteine 174/cysteine 199. Histidine 40 serves as the catalytic Charge relay system. Residue asparagine 77 is glycosylated (N-linked (GlcNAc...) asparagine). Residue aspartate 85 is the Charge relay system of the active site. Asparagine 129 is a glycosylation site (N-linked (GlcNAc...) asparagine). Serine 178 acts as the Charge relay system in catalysis.

This sequence belongs to the peptidase S1 family. Snake venom subfamily. In terms of assembly, monomer. In terms of processing, N-glycosylated. Contains sialic acid residues. Deglycosylation reduces in 50% the formation of fibrin clot. As to expression, expressed by the venom gland.

The protein localises to the secreted. Its activity is regulated as follows. Inhibited by leupeptin, heparin, and 1.10-phenantroline. In terms of biological role, thrombin-like enzyme that shows clotting activity upon human plasma. Shows specific fibrinogenolytic activity for Aalpha chain (FGA). Hydrolyzes fibrin, BAPNA and TAME, as well as chromogenic artificial substrates of the blood coagulation cascasde: S-27654 for factor X (F10), S-2302 for kallikrein (KLK), factor XIa (F11), and XIIa (F12), and S-2266 for kallikrein and factor XIa (F11). Subcutaneous injection into mice induces a mild edema. Intravenous and intramuscular injection reduce plasma fibrinogen concentration and increase the levels of fibrin(ogen) degradation products. Intramuscular injection also promotes an increase in the expression of proMMP-9, but is unable to activate it. The polypeptide is Thrombin-like enzyme BjussuSP-1 (Bothrops jararacussu (Jararacussu)).